Reading from the N-terminus, the 298-residue chain is ATP phosphoribosyltransferase (298 aa).

Belongs to the ATP phosphoribosyltransferase family. Long subfamily. Mg(2+) is required as a cofactor.

It localises to the cytoplasm. It catalyses the reaction 1-(5-phospho-beta-D-ribosyl)-ATP + diphosphate = 5-phospho-alpha-D-ribose 1-diphosphate + ATP. The protein operates within amino-acid biosynthesis; L-histidine biosynthesis; L-histidine from 5-phospho-alpha-D-ribose 1-diphosphate: step 1/9. Its activity is regulated as follows. Feedback inhibited by histidine. Functionally, catalyzes the condensation of ATP and 5-phosphoribose 1-diphosphate to form N'-(5'-phosphoribosyl)-ATP (PR-ATP). Has a crucial role in the pathway because the rate of histidine biosynthesis seems to be controlled primarily by regulation of HisG enzymatic activity. The protein is ATP phosphoribosyltransferase (hisG) of Photobacterium profundum (strain SS9).